The primary structure comprises 718 residues: Polyphosphate kinase (718 aa).

Asparagine 47 is a binding site for ATP. 2 residues coordinate Mg(2+): arginine 372 and arginine 402. The Phosphohistidine intermediate role is filled by histidine 432. ATP-binding residues include tyrosine 465, arginine 561, and histidine 589. A disordered region spans residues 683 to 718; the sequence is KADHGDTTPTSNAHQFIPMMSPKNEPDASDLDREDD. Residues 709 to 718 show a composition bias toward acidic residues; that stretch reads DASDLDREDD.

The protein belongs to the polyphosphate kinase 1 (PPK1) family. Mg(2+) is required as a cofactor. Post-translationally, an intermediate of this reaction is the autophosphorylated ppk in which a phosphate is covalently linked to a histidine residue through a N-P bond.

The catalysed reaction is [phosphate](n) + ATP = [phosphate](n+1) + ADP. In terms of biological role, catalyzes the reversible transfer of the terminal phosphate of ATP to form a long-chain polyphosphate (polyP). The sequence is that of Polyphosphate kinase from Lactiplantibacillus plantarum (strain ATCC BAA-793 / NCIMB 8826 / WCFS1) (Lactobacillus plantarum).